A 147-amino-acid polypeptide reads, in one-letter code: NADH-quinone oxidoreductase subunit A (147 aa).

The next 3 helical transmembrane spans lie at 16–36, 68–88, and 98–118; these read FAIF…GGWF, FYLV…LFAW, and VGFV…VYLV.

It belongs to the complex I subunit 3 family. As to quaternary structure, NDH-1 is composed of 13 different subunits. Subunits NuoA, H, J, K, L, M, N constitute the membrane sector of the complex.

It is found in the cell inner membrane. The enzyme catalyses a quinone + NADH + 5 H(+)(in) = a quinol + NAD(+) + 4 H(+)(out). Functionally, NDH-1 shuttles electrons from NADH, via FMN and iron-sulfur (Fe-S) centers, to quinones in the respiratory chain. The immediate electron acceptor for the enzyme in this species is believed to be ubiquinone. Couples the redox reaction to proton translocation (for every two electrons transferred, four hydrogen ions are translocated across the cytoplasmic membrane), and thus conserves the redox energy in a proton gradient. The protein is NADH-quinone oxidoreductase subunit A of Citrobacter koseri (strain ATCC BAA-895 / CDC 4225-83 / SGSC4696).